The chain runs to 166 residues: Protein-export protein SecB (166 aa).

The protein belongs to the SecB family. In terms of assembly, homotetramer, a dimer of dimers. One homotetramer interacts with 1 SecA dimer.

It localises to the cytoplasm. Functionally, one of the proteins required for the normal export of preproteins out of the cell cytoplasm. It is a molecular chaperone that binds to a subset of precursor proteins, maintaining them in a translocation-competent state. It also specifically binds to its receptor SecA. In Actinobacillus pleuropneumoniae serotype 5b (strain L20), this protein is Protein-export protein SecB.